The following is a 188-amino-acid chain: Trafficking protein particle complex subunit 5 (188 aa).

Ser10 carries the post-translational modification Phosphoserine.

The protein belongs to the TRAPP small subunits family. BET3 subfamily. Component of the multisubunit TRAPP (transport protein particle) complex, which includes at least TRAPPC2, TRAPPC2L, TRAPPC3, TRAPPC3L, TRAPPC4, TRAPPC5, TRAPPC8, TRAPPC9, TRAPPC10, TRAPPC11 and TRAPPC12.

It localises to the golgi apparatus. The protein resides in the cis-Golgi network. The protein localises to the endoplasmic reticulum. May play a role in vesicular transport from endoplasmic reticulum to Golgi. The chain is Trafficking protein particle complex subunit 5 (TRAPPC5) from Homo sapiens (Human).